A 604-amino-acid polypeptide reads, in one-letter code: Glutamine--fructose-6-phosphate aminotransferase [isomerizing] (604 aa).

Cys-2 (nucleophile; for GATase activity) is an active-site residue. Residues 2 to 216 form the Glutamine amidotransferase type-2 domain; that stretch reads CGIVGYVGFR…DGDVVRLTRE (215 aa). SIS domains lie at 281–420 and 453–594; these read LALD…GRGA and VAEK…VDQP. Residue Lys-599 is the For Fru-6P isomerization activity of the active site.

As to quaternary structure, homodimer.

It localises to the cytoplasm. The catalysed reaction is D-fructose 6-phosphate + L-glutamine = D-glucosamine 6-phosphate + L-glutamate. Catalyzes the first step in hexosamine metabolism, converting fructose-6P into glucosamine-6P using glutamine as a nitrogen source. This chain is Glutamine--fructose-6-phosphate aminotransferase [isomerizing], found in Thermus thermophilus (strain ATCC 27634 / DSM 579 / HB8).